Consider the following 62-residue polypeptide: MAVQQARTTPSKRGMRRSHDALKNAALSIEPTTGEVHRRHHISPDGFYRGRQVIKAKEQDEE.

Positions 28-62 are disordered; sequence SIEPTTGEVHRRHHISPDGFYRGRQVIKAKEQDEE.

It belongs to the bacterial ribosomal protein bL32 family.

The sequence is that of Large ribosomal subunit protein bL32 from Thioalkalivibrio sulfidiphilus (strain HL-EbGR7).